Here is a 96-residue protein sequence, read N- to C-terminus: Glutamyl-tRNA(Gln) amidotransferase subunit C (96 aa).

The protein belongs to the GatC family. In terms of assembly, heterotrimer of A, B and C subunits.

The catalysed reaction is L-glutamyl-tRNA(Gln) + L-glutamine + ATP + H2O = L-glutaminyl-tRNA(Gln) + L-glutamate + ADP + phosphate + H(+). It catalyses the reaction L-aspartyl-tRNA(Asn) + L-glutamine + ATP + H2O = L-asparaginyl-tRNA(Asn) + L-glutamate + ADP + phosphate + 2 H(+). In terms of biological role, allows the formation of correctly charged Asn-tRNA(Asn) or Gln-tRNA(Gln) through the transamidation of misacylated Asp-tRNA(Asn) or Glu-tRNA(Gln) in organisms which lack either or both of asparaginyl-tRNA or glutaminyl-tRNA synthetases. The reaction takes place in the presence of glutamine and ATP through an activated phospho-Asp-tRNA(Asn) or phospho-Glu-tRNA(Gln). The sequence is that of Glutamyl-tRNA(Gln) amidotransferase subunit C from Pseudomonas aeruginosa (strain ATCC 15692 / DSM 22644 / CIP 104116 / JCM 14847 / LMG 12228 / 1C / PRS 101 / PAO1).